Consider the following 219-residue polypeptide: PRELI domain-containing protein 1, mitochondrial (219 aa).

The PRELI/MSF1 domain occupies 36–174 (TEDIVHREVT…ILAKLQGEAP (139 aa)).

Forms a complex with TRIAP1 in the mitochondrion intermembrane space. Interacts with OPA1 and AIFM1.

The protein resides in the mitochondrion. Its subcellular location is the mitochondrion intermembrane space. The enzyme catalyses a 1,2-diacyl-sn-glycero-3-phosphate(in) = a 1,2-diacyl-sn-glycero-3-phosphate(out). In terms of biological role, involved in the modulation of the mitochondrial apoptotic pathway by ensuring the accumulation of cardiolipin (CL) in mitochondrial membranes. In vitro, the TRIAP1:PRELID1 complex mediates the transfer of phosphatidic acid (PA) between liposomes and probably functions as a PA transporter across the mitochondrion intermembrane space to provide PA for CL synthesis in the inner membrane. Regulates the mitochondrial apoptotic pathway in primary Th cells. Regulates Th cell differentiation by down-regulating STAT6 thereby reducing IL-4-induced Th2 cell number. May be important for the development of vital and immunocompetent organs. This chain is PRELI domain-containing protein 1, mitochondrial (PRELID1), found in Bos taurus (Bovine).